Reading from the N-terminus, the 106-residue chain is 3-oxoacyl-[acyl-carrier-protein] reductase (106 aa).

Belongs to the short-chain dehydrogenases/reductases (SDR) family. In terms of assembly, homotetramer. In terms of tissue distribution, mesocarp.

It localises to the plastid. Its subcellular location is the chloroplast. It carries out the reaction a (3R)-hydroxyacyl-[ACP] + NADP(+) = a 3-oxoacyl-[ACP] + NADPH + H(+). The protein operates within lipid metabolism; fatty acid biosynthesis. In Persea americana (Avocado), this protein is 3-oxoacyl-[acyl-carrier-protein] reductase.